Here is a 634-residue protein sequence, read N- to C-terminus: Sodium-dependent multivitamin transporter (634 aa).

Helical transmembrane passes span 23–43 (FSVVDYVVFGLLLVLSLVIGL), 65–85 (MGCLPVALSLLATFQSAVAIL), 100–120 (FLGCSYFLGLLIPAHIFIPVF), 142–162 (ICGTVTFIFQMVIYMGVALYA), 175–195 (LWLSVLALGIVCNIYTALGGL), 207–227 (LVMFLGQLVVIIVGAARVGGL), 255–275 (FWTLAFGGVFMMLSLYGVNQA), 295–315 (AVFPCQQVALCMSCLIGLVMF), 350–370 (LPGLFVACLFSGSLSTISSAF), 403–423 (FAYGLVCLGMAYISSHLGSVL), 427–447 (LSIFGMVGGPLLGLFCLGLFF), and 455–475 (AIVGLLTGLTMAFWIGIGSIV). N-linked (GlcNAc...) asparagine glycans are attached at residues Asn-488 and Asn-497. Residues 526-546 (LWYSAHNSTTVIVVGLIVSLL) traverse the membrane as a helical segment.

Belongs to the sodium:solute symporter (SSF) (TC 2.A.21) family. In terms of assembly, interacts with PDZD11. Expressed in the intestinal mucosa, liver and kidney (at protein level). Expressed in the colon.

The protein resides in the cell membrane. It localises to the apical cell membrane. It carries out the reaction biotin(out) + 2 Na(+)(out) = biotin(in) + 2 Na(+)(in). It catalyses the reaction (R)-pantothenate(out) + 2 Na(+)(out) = (R)-pantothenate(in) + 2 Na(+)(in). The enzyme catalyses (R)-lipoate(out) + 2 Na(+)(out) = (R)-lipoate(in) + 2 Na(+)(in). The catalysed reaction is iodide(out) + 2 Na(+)(out) = iodide(in) + 2 Na(+)(in). Functionally, sodium-dependent multivitamin transporter that mediates the electrogenic transport of pantothenate, biotin, lipoate and iodide. Functions as a Na(+)-coupled substrate symporter where the stoichiometry of Na(+):substrate is 2:1, creating an electrochemical Na(+) gradient used as driving force for substrate uptake. Required for biotin and pantothenate uptake in the intestine across the brush border membrane. Plays a role in the maintenance of intestinal mucosa integrity, by providing the gut mucosa with biotin. Contributes to the luminal uptake of biotin and pantothenate into the brain across the blood-brain barrier. This is Sodium-dependent multivitamin transporter from Mus musculus (Mouse).